Here is a 361-residue protein sequence, read N- to C-terminus: 1D-myo-inositol 2-acetamido-2-deoxy-alpha-D-glucopyranoside deacetylase (361 aa).

The segment covering Met1–Asp12 has biased composition (pro residues). Residues Met1–Asp27 form a disordered region. A compositionally biased stretch (low complexity) spans Glu16 to Gly25. 3 residues coordinate Zn(2+): His66, Asp69, and His207.

The protein belongs to the MshB deacetylase family. It depends on Zn(2+) as a cofactor.

It catalyses the reaction 1D-myo-inositol 2-acetamido-2-deoxy-alpha-D-glucopyranoside + H2O = 1D-myo-inositol 2-amino-2-deoxy-alpha-D-glucopyranoside + acetate. Functionally, catalyzes the deacetylation of 1D-myo-inositol 2-acetamido-2-deoxy-alpha-D-glucopyranoside (GlcNAc-Ins) in the mycothiol biosynthesis pathway. The sequence is that of 1D-myo-inositol 2-acetamido-2-deoxy-alpha-D-glucopyranoside deacetylase from Kineococcus radiotolerans (strain ATCC BAA-149 / DSM 14245 / SRS30216).